Consider the following 236-residue polypeptide: Chorionic somatomammotropin hormone (236 aa).

Positions 1–36 (MAPASSHREHQWTCNLVRGSRLLLLLVVSNLILCQG) are cleaved as a signal peptide. 3 disulfides stabilise this stretch: Cys-44-Cys-51, Cys-97-Cys-212, and Cys-229-Cys-234.

The protein belongs to the somatotropin/prolactin family.

Its subcellular location is the secreted. This chain is Chorionic somatomammotropin hormone (CSH), found in Ovis aries (Sheep).